The sequence spans 370 residues: Biotin synthase (370 aa).

Residues 56–283 (NAVQVSTLLS…KSHVRLSAGR (228 aa)) enclose the Radical SAM core domain. [4Fe-4S] cluster is bound by residues C71, C75, and C78. Positions 115, 146, 206, and 278 each coordinate [2Fe-2S] cluster. Positions 327–344 (GLHPEPSDPHADDAHRDD) are enriched in basic and acidic residues. The disordered stretch occupies residues 327 to 346 (GLHPEPSDPHADDAHRDDEQ).

This sequence belongs to the radical SAM superfamily. Biotin synthase family. As to quaternary structure, homodimer. [4Fe-4S] cluster serves as cofactor. The cofactor is [2Fe-2S] cluster.

The catalysed reaction is (4R,5S)-dethiobiotin + (sulfur carrier)-SH + 2 reduced [2Fe-2S]-[ferredoxin] + 2 S-adenosyl-L-methionine = (sulfur carrier)-H + biotin + 2 5'-deoxyadenosine + 2 L-methionine + 2 oxidized [2Fe-2S]-[ferredoxin]. Its pathway is cofactor biosynthesis; biotin biosynthesis; biotin from 7,8-diaminononanoate: step 2/2. Its function is as follows. Catalyzes the conversion of dethiobiotin (DTB) to biotin by the insertion of a sulfur atom into dethiobiotin via a radical-based mechanism. In Chromohalobacter salexigens (strain ATCC BAA-138 / DSM 3043 / CIP 106854 / NCIMB 13768 / 1H11), this protein is Biotin synthase.